We begin with the raw amino-acid sequence, 226 residues long: PKHD-type hydroxylase PFL_0865 (226 aa).

The Fe2OG dioxygenase domain maps to 78 to 178 (KVFPPLINCY…RYASFFWTQS (101 aa)). Residues histidine 96, aspartate 98, and histidine 159 each coordinate Fe cation. Arginine 169 is a binding site for 2-oxoglutarate.

Fe(2+) serves as cofactor. Requires L-ascorbate as cofactor.

The chain is PKHD-type hydroxylase PFL_0865 from Pseudomonas fluorescens (strain ATCC BAA-477 / NRRL B-23932 / Pf-5).